Consider the following 485-residue polypeptide: Ribulose bisphosphate carboxylase large chain (485 aa).

Substrate-binding residues include N124 and T174. The Proton acceptor role is filled by K176. K178 contributes to the substrate binding site. Mg(2+) is bound by residues K202, D204, and E205. K202 carries the post-translational modification N6-carboxylysine. H294 acts as the Proton acceptor in catalysis. 3 residues coordinate substrate: R295, H327, and S379.

Belongs to the RuBisCO large chain family. Type I subfamily. Heterohexadecamer of 8 large chains and 8 small chains. The cofactor is Mg(2+).

The enzyme catalyses 2 (2R)-3-phosphoglycerate + 2 H(+) = D-ribulose 1,5-bisphosphate + CO2 + H2O. The catalysed reaction is D-ribulose 1,5-bisphosphate + O2 = 2-phosphoglycolate + (2R)-3-phosphoglycerate + 2 H(+). Its function is as follows. RuBisCO catalyzes two reactions: the carboxylation of D-ribulose 1,5-bisphosphate, the primary event in carbon dioxide fixation, as well as the oxidative fragmentation of the pentose substrate. Both reactions occur simultaneously and in competition at the same active site. The sequence is that of Ribulose bisphosphate carboxylase large chain from Rhodopseudomonas palustris (strain ATCC BAA-98 / CGA009).